Consider the following 284-residue polypeptide: Lipoyl synthase (284 aa).

[4Fe-4S] cluster is bound by residues Cys38, Cys43, Cys49, Cys64, Cys68, Cys71, and Ser277. The 217-residue stretch at 50 to 266 (WSRGTATFLL…RDEALGMGFS (217 aa)) folds into the Radical SAM core domain.

This sequence belongs to the radical SAM superfamily. Lipoyl synthase family. It depends on [4Fe-4S] cluster as a cofactor.

It localises to the cytoplasm. The enzyme catalyses [[Fe-S] cluster scaffold protein carrying a second [4Fe-4S](2+) cluster] + N(6)-octanoyl-L-lysyl-[protein] + 2 oxidized [2Fe-2S]-[ferredoxin] + 2 S-adenosyl-L-methionine + 4 H(+) = [[Fe-S] cluster scaffold protein] + N(6)-[(R)-dihydrolipoyl]-L-lysyl-[protein] + 4 Fe(3+) + 2 hydrogen sulfide + 2 5'-deoxyadenosine + 2 L-methionine + 2 reduced [2Fe-2S]-[ferredoxin]. It functions in the pathway protein modification; protein lipoylation via endogenous pathway; protein N(6)-(lipoyl)lysine from octanoyl-[acyl-carrier-protein]: step 2/2. In terms of biological role, catalyzes the radical-mediated insertion of two sulfur atoms into the C-6 and C-8 positions of the octanoyl moiety bound to the lipoyl domains of lipoate-dependent enzymes, thereby converting the octanoylated domains into lipoylated derivatives. This Chlorobium phaeovibrioides (strain DSM 265 / 1930) (Prosthecochloris vibrioformis (strain DSM 265)) protein is Lipoyl synthase.